Here is a 126-residue protein sequence, read N- to C-terminus: Ribosome-binding factor A (126 aa).

Belongs to the RbfA family. As to quaternary structure, monomer. Binds 30S ribosomal subunits, but not 50S ribosomal subunits or 70S ribosomes.

The protein resides in the cytoplasm. In terms of biological role, one of several proteins that assist in the late maturation steps of the functional core of the 30S ribosomal subunit. Associates with free 30S ribosomal subunits (but not with 30S subunits that are part of 70S ribosomes or polysomes). Required for efficient processing of 16S rRNA. May interact with the 5'-terminal helix region of 16S rRNA. This is Ribosome-binding factor A from Azoarcus sp. (strain BH72).